A 107-amino-acid chain; its full sequence is Serine-rich and transmembrane domain-containing protein 1 (107 aa).

The chain crosses the membrane as a helical span at residues 43–63 (IYVSIFLSLLAFLLLLLIIAL).

The protein localises to the membrane. In Mus musculus (Mouse), this protein is Serine-rich and transmembrane domain-containing protein 1 (Sertm1).